Reading from the N-terminus, the 380-residue chain is Cytochrome b (380 aa).

4 helical membrane-spanning segments follow: residues 34 to 54, 78 to 99, 114 to 134, and 179 to 199; these read FGSL…LLAM, WLIR…YLHI, WNTG…GYVL, and FFAL…IHLT. Residues His84 and His98 each contribute to the heme b site. Heme b contacts are provided by His183 and His197. His202 serves as a coordination point for a ubiquinone. 4 consecutive transmembrane segments (helical) span residues 227-247, 289-309, 321-341, and 348-368; these read LKDI…ALFS, LGGV…PFLH, LSQL…WVGS, and FIII…ILFP.

The protein belongs to the cytochrome b family. As to quaternary structure, the cytochrome bc1 complex contains 11 subunits: 3 respiratory subunits (MT-CYB, CYC1 and UQCRFS1), 2 core proteins (UQCRC1 and UQCRC2) and 6 low-molecular weight proteins (UQCRH/QCR6, UQCRB/QCR7, UQCRQ/QCR8, UQCR10/QCR9, UQCR11/QCR10 and a cleavage product of UQCRFS1). This cytochrome bc1 complex then forms a dimer. The cofactor is heme b.

The protein resides in the mitochondrion inner membrane. Functionally, component of the ubiquinol-cytochrome c reductase complex (complex III or cytochrome b-c1 complex) that is part of the mitochondrial respiratory chain. The b-c1 complex mediates electron transfer from ubiquinol to cytochrome c. Contributes to the generation of a proton gradient across the mitochondrial membrane that is then used for ATP synthesis. The sequence is that of Cytochrome b (MT-CYB) from Macronectes halli (Hall's giant petrel).